The following is a 461-amino-acid chain: Kremen protein 2 (461 aa).

Positions Met-1–Ala-24 are cleaved as a signal peptide. Topologically, residues Gly-25–Ser-363 are extracellular. Residues Glu-34 to Cys-118 enclose the Kringle domain. Intrachain disulfides connect Cys-35–Cys-118, Cys-59–Cys-99, and Cys-88–Cys-113. The N-linked (GlcNAc...) asparagine glycan is linked to Asn-48. A WSC domain is found at Met-120–Ser-214. An intrachain disulfide couples Cys-218 to Cys-244. The CUB domain occupies Cys-218–Leu-325. Residues Asn-221, Asn-243, and Asn-350 are each glycosylated (N-linked (GlcNAc...) asparagine). Residues Val-329–Pro-357 are disordered. Residues Ile-364–Leu-386 traverse the membrane as a helical segment. Over Arg-387–Leu-461 the chain is Cytoplasmic. The disordered stretch occupies residues Cys-429 to Ser-452.

As to quaternary structure, interacts with ERLEC1. Forms a ternary complex with DKK1 and LRP6.

It localises to the membrane. In terms of biological role, receptor for Dickkopf proteins. Cooperates with DKK1/2 to inhibit Wnt/beta-catenin signaling by promoting the endocytosis of Wnt receptors LRP5 and LRP6. Plays a role in limb development; attenuates Wnt signaling in the developing limb to allow normal limb patterning and can also negatively regulate bone formation. The polypeptide is Kremen protein 2 (Kremen2) (Mus musculus (Mouse)).